The sequence spans 346 residues: Phosphate-binding protein PstS (346 aa).

The N-terminal stretch at 1-25 (MKVMRTTVATVVAATLSMSAFSVFA) is a signal peptide. Phosphate is bound by residues 34 to 36 (ATF), Ser63, Asp81, and 164 to 166 (SGT).

This sequence belongs to the PstS family. In terms of assembly, the complex is composed of two ATP-binding proteins (PstB), two transmembrane proteins (PstC and PstA) and a solute-binding protein (PstS).

It is found in the periplasm. Part of the ABC transporter complex PstSACB involved in phosphate import. The polypeptide is Phosphate-binding protein PstS (pstS) (Escherichia coli (strain K12)).